The primary structure comprises 484 residues: Protein DETOXIFICATION 33 (484 aa).

Basic and acidic residues predominate over residues 1-16; that stretch reads MGKDKTLPLLDPREPP. A disordered region spans residues 1 to 22; sequence MGKDKTLPLLDPREPPELTGTK. The next 12 membrane-spanning stretches (helical) occupy residues 39–59, 81–101, 122–142, 155–175, 190–210, 218–238, 267–287, 294–314, 338–358, 380–400, 409–429, and 439–459; these read LWEL…LGAL, VISG…ETLC, VILF…PPIL, AGKF…NFPI, WISG…ILYF, AITL…YILI, ALML…TGLL, VDAI…SIGF, VIVV…VVLA, IAVL…LSGV, LVAY…GLVL, and GIWG…IGII.

Belongs to the multi antimicrobial extrusion (MATE) (TC 2.A.66.1) family.

Its subcellular location is the membrane. The chain is Protein DETOXIFICATION 33 from Arabidopsis thaliana (Mouse-ear cress).